The sequence spans 259 residues: Imidazole glycerol phosphate synthase subunit HisF (259 aa).

Active-site residues include Asp-11 and Asp-130.

It belongs to the HisA/HisF family. In terms of assembly, heterodimer of HisH and HisF.

The protein resides in the cytoplasm. It carries out the reaction 5-[(5-phospho-1-deoxy-D-ribulos-1-ylimino)methylamino]-1-(5-phospho-beta-D-ribosyl)imidazole-4-carboxamide + L-glutamine = D-erythro-1-(imidazol-4-yl)glycerol 3-phosphate + 5-amino-1-(5-phospho-beta-D-ribosyl)imidazole-4-carboxamide + L-glutamate + H(+). The protein operates within amino-acid biosynthesis; L-histidine biosynthesis; L-histidine from 5-phospho-alpha-D-ribose 1-diphosphate: step 5/9. Its function is as follows. IGPS catalyzes the conversion of PRFAR and glutamine to IGP, AICAR and glutamate. The HisF subunit catalyzes the cyclization activity that produces IGP and AICAR from PRFAR using the ammonia provided by the HisH subunit. This chain is Imidazole glycerol phosphate synthase subunit HisF, found in Polaromonas naphthalenivorans (strain CJ2).